The primary structure comprises 438 residues: MRVFIDEIARHVDQEVELRGWLYQRRSKGKIHFLILRDGTGFLQATVVQGEVPEAVFREADHLPQETALRVWGRVREDRRAPGGFELAVRDLQVVSRPQGEYPIGPKEHGIDFLMDHRHLWLRHRRPFAVMRIRDELERAIHEFFGERGFLRFDAPILTPSAVEGTTELFEVELFDGEKAYLSQSGQLYAEAGALAFAKVYTFGPTFRAERSKTRRHLLEFWMVEPEVAFMTHEENMALQEELVSFLVARVLERRSRELEMLGRDPKALEPAAEGHYARLTYKEAVALVNRIAQEDPEVPPLPYGEDFGAPHEAALSRRFDRPVFVERYPARIKAFYMEPDPEDPELVLNDDLLAPEGYGEIIGGSQRIHDLELLRRKIQEFGLPEEVYDWYLDLRRFGSVPHSGFGLGLERTVAWICGLAHVREAIPFPRMYTRMRP.

Belongs to the class-II aminoacyl-tRNA synthetase family. Homodimer.

The protein localises to the cytoplasm. It catalyses the reaction tRNA(Asn) + L-asparagine + ATP = L-asparaginyl-tRNA(Asn) + AMP + diphosphate + H(+). This is Asparagine--tRNA ligase from Thermus thermophilus (strain ATCC BAA-163 / DSM 7039 / HB27).